A 194-amino-acid chain; its full sequence is FMN-dependent NADH:quinone oxidoreductase (194 aa).

FMN contacts are provided by residues Ser-10, 16-18 (SQS), 91-94 (MYNF), and 135-138 (TRGG).

Belongs to the azoreductase type 1 family. In terms of assembly, homodimer. FMN serves as cofactor.

It catalyses the reaction 2 a quinone + NADH + H(+) = 2 a 1,4-benzosemiquinone + NAD(+). The enzyme catalyses N,N-dimethyl-1,4-phenylenediamine + anthranilate + 2 NAD(+) = 2-(4-dimethylaminophenyl)diazenylbenzoate + 2 NADH + 2 H(+). Functionally, quinone reductase that provides resistance to thiol-specific stress caused by electrophilic quinones. Its function is as follows. Also exhibits azoreductase activity. Catalyzes the reductive cleavage of the azo bond in aromatic azo compounds to the corresponding amines. The protein is FMN-dependent NADH:quinone oxidoreductase of Vibrio parahaemolyticus serotype O3:K6 (strain RIMD 2210633).